The chain runs to 408 residues: Guanine nucleotide-binding protein alpha-14 subunit (408 aa).

GTP-binding positions include 38–45 (HSEELEAK), 78–85 (GGPSSGKS), 201–205 (NRISK), 216–222 (VHSRKAT), 241–245 (DVGGQ), 285–288 (FPNF), 325–328 (NKVD), and A380. The 339-residue stretch at 70 to 408 (SHIKILILGG…KANSKATGLS (339 aa)) folds into the G-alpha domain. Residues 73–86 (KILILGGPSSGKST) form a G1 motif region. S85 contacts Mg(2+). Positions 214–222 (DIVHSRKAT) are G2 motif. T222 lines the Mg(2+) pocket. Residues 237–246 (LLMVDVGGQR) are G3 motif. Residues 321–328 (LLFFNKVD) form a G4 motif region. The segment at 378–383 (TTATNT) is G5 motif.

It belongs to the G-alpha family. In terms of assembly, g proteins are composed of 3 units; alpha, beta and gamma. The alpha chain contains the guanine nucleotide binding site.

In terms of biological role, guanine nucleotide-binding proteins (G proteins) are involved as modulators or transducers in various transmembrane signaling systems. The sequence is that of Guanine nucleotide-binding protein alpha-14 subunit (gpa-14) from Caenorhabditis briggsae.